A 241-amino-acid polypeptide reads, in one-letter code: Mitochondrial inner membrane protease ATP23 (241 aa).

Residue histidine 141 coordinates a divalent metal cation. Residue glutamate 142 is part of the active site. Histidine 145 lines the a divalent metal cation pocket.

This sequence belongs to the peptidase M76 family.

It localises to the mitochondrion inner membrane. Functionally, has a dual role in the assembly of mitochondrial ATPase. Acts as a protease that removes N-terminal residues of mitochondrial ATPase CF(0) subunit 6 at the intermembrane space side. Also involved in the correct assembly of the membrane-embedded ATPase CF(0) particle, probably mediating association of subunit 6 with the subunit 9 ring. The chain is Mitochondrial inner membrane protease ATP23 (ATP23) from Lodderomyces elongisporus (strain ATCC 11503 / CBS 2605 / JCM 1781 / NBRC 1676 / NRRL YB-4239) (Yeast).